The following is a 205-amino-acid chain: Guanylate kinase (205 aa).

The Guanylate kinase-like domain maps to 18-196; the sequence is PKLFTISAPA…AYQVLRSIFI (179 aa). 25-32 contacts ATP; the sequence is APAGAGKT.

Belongs to the guanylate kinase family.

The protein resides in the cytoplasm. The enzyme catalyses GMP + ATP = GDP + ADP. Essential for recycling GMP and indirectly, cGMP. The protein is Guanylate kinase (gmk) of Chlamydia muridarum (strain MoPn / Nigg).